Reading from the N-terminus, the 327-residue chain is Cytochrome c oxidase subunit 2 (327 aa).

Residues 1–23 form the signal peptide; it reads MEQIPASIWTLTAGVVVTLISFW. 2 consecutive transmembrane segments (helical) span residues 56–78 and 96–114; these read LFLV…AGEE and AIPA…DIFQ. Cu cation-binding residues include H221, C255, C259, and H263.

This sequence belongs to the cytochrome c oxidase subunit 2 family. The cofactor is Cu cation.

It is found in the cell membrane. It carries out the reaction 4 Fe(II)-[cytochrome c] + O2 + 8 H(+)(in) = 4 Fe(III)-[cytochrome c] + 2 H2O + 4 H(+)(out). In terms of biological role, subunits I and II form the functional core of the enzyme complex. Electrons originating in cytochrome c are transferred via heme a and Cu(A) to the binuclear center formed by heme a3 and Cu(B). In Thermostichus vulcanus (Synechococcus vulcanus), this protein is Cytochrome c oxidase subunit 2 (ctaC).